Here is a 745-residue protein sequence, read N- to C-terminus: Meiotic driver SPOK3 (745 aa).

A coiled-coil region spans residues 4-34 (KDRITQLLRELEEAKAREAQERCEKERLQLE). 2 disordered regions span residues 173-222 (ELTQ…DGVG) and 407-487 (LSSA…VDPQ). Positions 188–197 (TSDRSLERRQ) are enriched in basic and acidic residues. Polar residues-rich tracts occupy residues 208–217 (KSKYICSNRQ) and 409–422 (SAPSSQNTDISEYT). The interval 214-325 (SNRQPDGVGI…LLLYVDRDDW (112 aa)) is required for antidote activity. Positions 466 to 482 (AKRERGPSSGGKDDGRS) are enriched in basic and acidic residues. A required for poison activity region spans residues 491-745 (QYCTQACLLG…SPMATPSHGG (255 aa)).

It is found in the cytoplasm. It localises to the nucleus. In terms of biological role, promotes unequal transmission of alleles from the parental zygote to progeny spores by acting as poison/antidote system, leading to poisoning of progeny that do not inherit the allele. May possess DNA nuclease activity that leads to spore killing, and a kinase activity that confers resistance to the nuclease activity. This is Meiotic driver SPOK3 from Podospora anserina (Pleurage anserina).